The sequence spans 557 residues: Potassium-transporting ATPase potassium-binding subunit (557 aa).

Helical transmembrane passes span 4 to 24, 61 to 81, 131 to 151, 174 to 194, 253 to 273, 280 to 300, 375 to 395, 412 to 432, 483 to 503, and 528 to 548; these read LGAGLLQAGLLLLLLAAVHVP, TYALSVLGFSTVSILFLYAFL, GLTVQNFLSAAVGLAVAVALV, LRVLLPLAFAGAVLLLLTGVV, LEVFLILVIPFSLPRAFGTLV, LAVLSVMGTIFGASLALTTWA, GLYGMLVLAVITVFVAGLMVG, CAALYVLVTPAVLLTGTAVAL, LAIWLGRFLPMVLVLALAGAF, and LAVVVVVSALTFFPALALGPI.

It belongs to the KdpA family. As to quaternary structure, the system is composed of three essential subunits: KdpA, KdpB and KdpC.

It localises to the cell membrane. In terms of biological role, part of the high-affinity ATP-driven potassium transport (or Kdp) system, which catalyzes the hydrolysis of ATP coupled with the electrogenic transport of potassium into the cytoplasm. This subunit binds the extracellular potassium ions and delivers the ions to the membrane domain of KdpB through an intramembrane tunnel. The chain is Potassium-transporting ATPase potassium-binding subunit from Kineococcus radiotolerans (strain ATCC BAA-149 / DSM 14245 / SRS30216).